Reading from the N-terminus, the 199-residue chain is Ribonuclease HII (199 aa).

The region spanning 10-199 (RIEAGCDEAG…LLPEQLTLGF (190 aa)) is the RNase H type-2 domain. A divalent metal cation contacts are provided by aspartate 16, glutamate 17, and aspartate 108.

The protein belongs to the RNase HII family. The cofactor is Mn(2+). Mg(2+) serves as cofactor.

The protein localises to the cytoplasm. The enzyme catalyses Endonucleolytic cleavage to 5'-phosphomonoester.. In terms of biological role, endonuclease that specifically degrades the RNA of RNA-DNA hybrids. The sequence is that of Ribonuclease HII from Parabacteroides distasonis (strain ATCC 8503 / DSM 20701 / CIP 104284 / JCM 5825 / NCTC 11152).